The chain runs to 422 residues: Probable cysteine desulfurase (422 aa).

Lysine 235 is subject to N6-(pyridoxal phosphate)lysine.

Belongs to the class-V pyridoxal-phosphate-dependent aminotransferase family. Csd subfamily. Pyridoxal 5'-phosphate serves as cofactor.

It carries out the reaction (sulfur carrier)-H + L-cysteine = (sulfur carrier)-SH + L-alanine. Catalyzes the removal of elemental sulfur and selenium atoms from L-cysteine, L-cystine, L-selenocysteine, and L-selenocystine to produce L-alanine. This Borreliella burgdorferi (strain ATCC 35210 / DSM 4680 / CIP 102532 / B31) (Borrelia burgdorferi) protein is Probable cysteine desulfurase (csd).